The sequence spans 552 residues: NADH-ubiquinone oxidoreductase chain 5 (552 aa).

15 helical membrane-spanning segments follow: residues 11 to 31 (PVTIHLGTWISLGDIVIPFGL), 36 to 56 (LAMTVIVPVGIITLCVLAYAI), 68 to 88 (FYIILSIFAVFMTILVVSDNY), 89 to 109 (LMMFIGWEFVGVISYLLISFW), 121 to 141 (SAILLNRMGDTFFVIALGLMI), 152 to 172 (IALVTPYMNTFLLNTLGLLLL), 196 to 216 (TPVSALLHAATMVCAGVYVLV), 229 to 249 (LLIICWLGGLTTLVSGLIAIV), 256 to 274 (VIALSTMSQLSIMVLAIGI), 287 to 307 (HAFFKALLFMGAGSVIHSFVA), 322 to 342 (LPFSYTAILIASLSLMAIPGL), 365 to 386 (ILYYIAVGSATLTSIYSLRVLY), 406 to 426 (SLGMMIPMIVLVIYSIFIGYS), 453 to 473 (AYIKLLPLILGLTLSAILVYV), and 532 to 552 (SRAVTYINVIVIINILYLFFI).

Belongs to the complex I subunit 5 family.

The protein localises to the mitochondrion inner membrane. The catalysed reaction is a ubiquinone + NADH + 5 H(+)(in) = a ubiquinol + NAD(+) + 4 H(+)(out). Its function is as follows. Core subunit of the mitochondrial membrane respiratory chain NADH dehydrogenase (Complex I) that is believed to belong to the minimal assembly required for catalysis. Complex I functions in the transfer of electrons from NADH to the respiratory chain. The immediate electron acceptor for the enzyme is believed to be ubiquinone. This Candida albicans (strain SC5314 / ATCC MYA-2876) (Yeast) protein is NADH-ubiquinone oxidoreductase chain 5 (NAD5).